A 664-amino-acid polypeptide reads, in one-letter code: Chaperone protein dnaK1 (664 aa).

T198 carries the post-translational modification Phosphothreonine; by autocatalysis.

The protein belongs to the heat shock protein 70 family.

Acts as a chaperone. In Prochlorococcus marinus (strain MIT 9313), this protein is Chaperone protein dnaK1 (dnaK1).